Reading from the N-terminus, the 69-residue chain is U-scoloptoxin(21)-Sm2a (69 aa).

An N-terminal signal peptide occupies residues 1–21 (MFFLGFIIVCASEEQSDNRLP). The interval 46 to 69 (ANDPNGPGRRRRSPIVREEILRHP) is disordered. Residues 60-69 (IVREEILRHP) are compositionally biased toward basic and acidic residues.

The protein belongs to the scoloptoxin-21 family. As to expression, expressed by the venom gland.

The protein localises to the secreted. This is U-scoloptoxin(21)-Sm2a from Scolopendra morsitans (Tanzanian blue ringleg centipede).